The chain runs to 592 residues: ATP-dependent RNA helicase DBP3 (592 aa).

The segment at 1 to 146 (MGKRPIEDDA…AGSYTEHTEL (146 aa)) is disordered. Residues 19–31 (KKSKKEKSGKSKK) are compositionally biased toward basic residues. Basic and acidic residues predominate over residues 73–82 (EAKEASKAGK). Positions 97 to 108 (AARKAARKAEKK) are enriched in basic residues. A compositionally biased stretch (polar residues) spans 116–141 (TASSAPTEASSVPAQTLSSSNAGSYT). The Q motif motif lies at 179-206 (VNFKYLPVTDESQRAPFAGFTAPTPIQA). The region spanning 209–382 (WPFLLSGRDM…STFMVSPVRI (174 aa)) is the Helicase ATP-binding domain. 222-229 (AETGSGKT) is an ATP binding site. The short motif at 330-333 (DEAD) is the DEAD box element. Residues 413-562 (RLLQLLKQYQ…EVPEELLKFG (150 aa)) form the Helicase C-terminal domain.

It belongs to the DEAD box helicase family. DDX5/DBP2 subfamily.

Its subcellular location is the nucleus. It is found in the nucleolus. The catalysed reaction is ATP + H2O = ADP + phosphate + H(+). ATP-dependent RNA helicase required for 60S ribosomal subunit synthesis. Involved in efficient pre-rRNA processing, predominantly at site A3, which is necessary for the normal formation of 25S and 5.8S rRNAs. The chain is ATP-dependent RNA helicase DBP3 (DBP3) from Phaeosphaeria nodorum (strain SN15 / ATCC MYA-4574 / FGSC 10173) (Glume blotch fungus).